The sequence spans 62 residues: Large ribosomal subunit protein bL28 (62 aa).

Belongs to the bacterial ribosomal protein bL28 family.

The protein is Large ribosomal subunit protein bL28 of Halalkalibacterium halodurans (strain ATCC BAA-125 / DSM 18197 / FERM 7344 / JCM 9153 / C-125) (Bacillus halodurans).